The chain runs to 123 residues: Prismalin-14 (123 aa).

The signal sequence occupies residues 1–16; the sequence is MRSLLVLLALAACASA.

As to expression, prismatic layer of shell (at protein level). Expressed primarily in the mantle with highest level in the mantle edge and lower level in the mantle pallium.

It localises to the secreted. Its function is as follows. May be involved in calcification of the prismatic layer of the shell. The protein is Prismalin-14 of Margaritifera margaritifera (Freshwater pearl mussel).